The chain runs to 185 residues: Small ribosomal subunit protein uS7 (185 aa).

It belongs to the universal ribosomal protein uS7 family. In terms of assembly, part of the 30S ribosomal subunit.

In terms of biological role, one of the primary rRNA binding proteins, it binds directly to 16S rRNA where it nucleates assembly of the head domain of the 30S subunit. Is located at the subunit interface close to the decoding center. This Methanosarcina barkeri (strain Fusaro / DSM 804) protein is Small ribosomal subunit protein uS7.